We begin with the raw amino-acid sequence, 191 residues long: Probable chemoreceptor glutamine deamidase CheD (191 aa).

Belongs to the CheD family.

The enzyme catalyses L-glutaminyl-[protein] + H2O = L-glutamyl-[protein] + NH4(+). Its function is as follows. Probably deamidates glutamine residues to glutamate on methyl-accepting chemotaxis receptors (MCPs), playing an important role in chemotaxis. This Hydrogenovibrio crunogenus (strain DSM 25203 / XCL-2) (Thiomicrospira crunogena) protein is Probable chemoreceptor glutamine deamidase CheD.